Reading from the N-terminus, the 314-residue chain is Mycothiol acetyltransferase (314 aa).

N-acetyltransferase domains lie at 18 to 156 (ATIR…RPLA) and 168 to 314 (IRIA…MYQL). Residue Glu-38 coordinates 1D-myo-inositol 2-(L-cysteinylamino)-2-deoxy-alpha-D-glucopyranoside. Acetyl-CoA is bound at residue 92–94 (VVV). 1D-myo-inositol 2-(L-cysteinylamino)-2-deoxy-alpha-D-glucopyranoside is bound by residues Glu-195, Lys-234, and Glu-248. Residues 252–254 (VGL) and 259–265 (QGHGLGR) each bind acetyl-CoA. A 1D-myo-inositol 2-(L-cysteinylamino)-2-deoxy-alpha-D-glucopyranoside-binding site is contributed by Tyr-286.

This sequence belongs to the acetyltransferase family. MshD subfamily. In terms of assembly, monomer.

The enzyme catalyses 1D-myo-inositol 2-(L-cysteinylamino)-2-deoxy-alpha-D-glucopyranoside + acetyl-CoA = mycothiol + CoA + H(+). Functionally, catalyzes the transfer of acetyl from acetyl-CoA to desacetylmycothiol (Cys-GlcN-Ins) to form mycothiol. In Catenulispora acidiphila (strain DSM 44928 / JCM 14897 / NBRC 102108 / NRRL B-24433 / ID139908), this protein is Mycothiol acetyltransferase.